The sequence spans 96 residues: Aspartyl/glutamyl-tRNA(Asn/Gln) amidotransferase subunit C (96 aa).

It belongs to the GatC family. As to quaternary structure, heterotrimer of A, B and C subunits.

The catalysed reaction is L-glutamyl-tRNA(Gln) + L-glutamine + ATP + H2O = L-glutaminyl-tRNA(Gln) + L-glutamate + ADP + phosphate + H(+). The enzyme catalyses L-aspartyl-tRNA(Asn) + L-glutamine + ATP + H2O = L-asparaginyl-tRNA(Asn) + L-glutamate + ADP + phosphate + 2 H(+). In terms of biological role, allows the formation of correctly charged Asn-tRNA(Asn) or Gln-tRNA(Gln) through the transamidation of misacylated Asp-tRNA(Asn) or Glu-tRNA(Gln) in organisms which lack either or both of asparaginyl-tRNA or glutaminyl-tRNA synthetases. The reaction takes place in the presence of glutamine and ATP through an activated phospho-Asp-tRNA(Asn) or phospho-Glu-tRNA(Gln). The chain is Aspartyl/glutamyl-tRNA(Asn/Gln) amidotransferase subunit C from Sulfurimonas denitrificans (strain ATCC 33889 / DSM 1251) (Thiomicrospira denitrificans (strain ATCC 33889 / DSM 1251)).